Reading from the N-terminus, the 360-residue chain is Photosystem II protein D1 (360 aa).

The next 3 helical transmembrane spans lie at 30–47 (YVGW…AAAI), 119–134 (HFLI…QWEL), and 143–157 (WICV…AAFA). Residue histidine 119 participates in chlorophyll a binding. Tryptophan 127 is a binding site for pheophytin a. [CaMn4O5] cluster contacts are provided by aspartate 171 and glutamate 190. The chain crosses the membrane as a helical span at residues 198 to 219 (FHMAGVAGMFGGSLFSAMHGSL). Chlorophyll a is bound at residue histidine 199. A quinone contacts are provided by residues histidine 216 and 265–266 (SF). Histidine 216 lines the Fe cation pocket. Position 273 (histidine 273) interacts with Fe cation. The helical transmembrane segment at 275–289 (FLAIFPVVCVWLTSM) threads the bilayer. Histidine 333, glutamate 334, aspartate 343, and alanine 345 together coordinate [CaMn4O5] cluster. Residues 346-360 (AAESTSVALVAPSIG) constitute a propeptide that is removed on maturation.

This sequence belongs to the reaction center PufL/M/PsbA/D family. As to quaternary structure, PSII is composed of 1 copy each of membrane proteins PsbA, PsbB, PsbC, PsbD, PsbE, PsbF, PsbH, PsbI, PsbJ, PsbK, PsbL, PsbM, PsbT, PsbX, PsbY, Psb30/Ycf12, peripheral proteins PsbO, CyanoQ (PsbQ), PsbU, PsbV and a large number of cofactors. It forms dimeric complexes. The D1/D2 heterodimer binds P680, chlorophylls that are the primary electron donor of PSII, and subsequent electron acceptors. It shares a non-heme iron and each subunit binds pheophytin, quinone, additional chlorophylls, carotenoids and lipids. D1 provides most of the ligands for the Mn4-Ca-O5 cluster of the oxygen-evolving complex (OEC). There is also a Cl(-1) ion associated with D1 and D2, which is required for oxygen evolution. The PSII complex binds additional chlorophylls, carotenoids and specific lipids. is required as a cofactor. In terms of processing, tyr-162 forms a radical intermediate that is referred to as redox-active TyrZ, YZ or Y-Z. C-terminally processed by CtpA; processing is essential to allow assembly of the oxygen-evolving complex and thus photosynthetic growth.

The protein localises to the cellular thylakoid membrane. The catalysed reaction is 2 a plastoquinone + 4 hnu + 2 H2O = 2 a plastoquinol + O2. Photosystem II (PSII) is a light-driven water:plastoquinone oxidoreductase that uses light energy to abstract electrons from H(2)O, generating O(2) and a proton gradient subsequently used for ATP formation. It consists of a core antenna complex that captures photons, and an electron transfer chain that converts photonic excitation into a charge separation. The D1/D2 (PsbA/PsbD) reaction center heterodimer binds P680, the primary electron donor of PSII as well as several subsequent electron acceptors. This chain is Photosystem II protein D1, found in Prochlorococcus marinus (strain SARG / CCMP1375 / SS120).